The sequence spans 361 residues: F-box protein pof7 (361 aa).

An F-box domain is found at 105–157; that stretch reads NESVVPNILKLPDEVLLVILENCIRDLHDLRYLSSIALTCKHFAKALRADSLY.

In terms of assembly, interacts with skp1.

The protein resides in the cytoplasm. The polypeptide is F-box protein pof7 (pof7) (Schizosaccharomyces pombe (strain 972 / ATCC 24843) (Fission yeast)).